Consider the following 555-residue polypeptide: Probable beta-glucosidase btgE (555 aa).

A signal peptide spans 1-18 (MRGAILATAAAFAGTAVA). Disordered stretches follow at residues 92–114 (TSSA…VTLP) and 263–290 (TTSA…PTGA). Over residues 263 to 288 (TTSAASTTTAVPSSSTTTSSATSVPT) the composition is skewed to low complexity. Catalysis depends on Glu392, which acts as the Proton donor. Catalysis depends on Glu488, which acts as the Nucleophile.

It belongs to the glycosyl hydrolase 17 family.

The protein resides in the secreted. Its subcellular location is the cell wall. It carries out the reaction Hydrolysis of terminal, non-reducing beta-D-glucosyl residues with release of beta-D-glucose.. The protein operates within glycan metabolism; cellulose degradation. Its function is as follows. Beta-glucosidases are one of a number of cellulolytic enzymes involved in the degradation of cellulosic biomass. Catalyzes the last step releasing glucose from the inhibitory cellobiose. This Emericella nidulans (strain FGSC A4 / ATCC 38163 / CBS 112.46 / NRRL 194 / M139) (Aspergillus nidulans) protein is Probable beta-glucosidase btgE (btgE).